A 285-amino-acid polypeptide reads, in one-letter code: Probable endonuclease 4 (285 aa).

9 residues coordinate Zn(2+): His-67, His-107, Glu-144, Asp-177, His-180, His-214, Asp-227, His-229, and Glu-259.

Belongs to the AP endonuclease 2 family. The cofactor is Zn(2+).

The enzyme catalyses Endonucleolytic cleavage to 5'-phosphooligonucleotide end-products.. In terms of biological role, endonuclease IV plays a role in DNA repair. It cleaves phosphodiester bonds at apurinic or apyrimidinic (AP) sites, generating a 3'-hydroxyl group and a 5'-terminal sugar phosphate. In Persephonella marina (strain DSM 14350 / EX-H1), this protein is Probable endonuclease 4.